The following is a 359-amino-acid chain: Photosystem II protein D1 2 (359 aa).

3 consecutive transmembrane segments (helical) span residues 29-46, 118-133, and 142-156; these read YVGW…AATT, HFLI…EWEL, and WICV…AASA. A chlorophyll a-binding site is contributed by His118. Tyr126 lines the pheophytin a pocket. Residues Asp170 and Glu189 each contribute to the [CaMn4O5] cluster site. A helical transmembrane segment spans residues 197–218; the sequence is FHMLGVAGVFGGSLFSAMHGSL. His198 provides a ligand contact to chlorophyll a. A quinone is bound by residues His215 and 264–265; that span reads SF. His215 is a Fe cation binding site. His272 serves as a coordination point for Fe cation. The helical transmembrane segment at 274–288 threads the bilayer; it reads FLAAWPVVGIWFTAL. [CaMn4O5] cluster contacts are provided by His332, Glu333, Asp342, and Ala344. Positions 345 to 359 are excised as a propeptide; it reads AAESTPVALQAPAIG.

It belongs to the reaction center PufL/M/PsbA/D family. As to quaternary structure, PSII is composed of 1 copy each of membrane proteins PsbA, PsbB, PsbC, PsbD, PsbE, PsbF, PsbH, PsbI, PsbJ, PsbK, PsbL, PsbM, PsbT, PsbX, PsbY, PsbZ, Psb30/Ycf12, peripheral proteins PsbO, CyanoQ (PsbQ), PsbU, PsbV and a large number of cofactors. It forms dimeric complexes. The cofactor is The D1/D2 heterodimer binds P680, chlorophylls that are the primary electron donor of PSII, and subsequent electron acceptors. It shares a non-heme iron and each subunit binds pheophytin, quinone, additional chlorophylls, carotenoids and lipids. D1 provides most of the ligands for the Mn4-Ca-O5 cluster of the oxygen-evolving complex (OEC). There is also a Cl(-1) ion associated with D1 and D2, which is required for oxygen evolution. The PSII complex binds additional chlorophylls, carotenoids and specific lipids.. Post-translationally, tyr-161 forms a radical intermediate that is referred to as redox-active TyrZ, YZ or Y-Z. C-terminally processed by CtpA; processing is essential to allow assembly of the oxygen-evolving complex and thus photosynthetic growth.

It localises to the cellular thylakoid membrane. The catalysed reaction is 2 a plastoquinone + 4 hnu + 2 H2O = 2 a plastoquinol + O2. Its function is as follows. Photosystem II (PSII) is a light-driven water:plastoquinone oxidoreductase that uses light energy to abstract electrons from H(2)O, generating O(2) and a proton gradient subsequently used for ATP formation. It consists of a core antenna complex that captures photons, and an electron transfer chain that converts photonic excitation into a charge separation. The D1/D2 (PsbA/PsbD) reaction center heterodimer binds P680, the primary electron donor of PSII as well as several subsequent electron acceptors. This Synechococcus sp. (strain CC9311) protein is Photosystem II protein D1 2.